Here is a 509-residue protein sequence, read N- to C-terminus: CDK5RAP3 protein homolog (509 aa).

The protein belongs to the CDK5RAP3 family.

Its subcellular location is the nucleus. It localises to the cytoplasm. Functionally, substrate adapter of E3 ligase complexes mediating ufmylation, the covalent attachment of the ubiquitin-like modifier UFM1 to substrate proteins, and which is involved in various processes, such as ribosome recycling and reticulophagy (also called ER-phagy). This is CDK5RAP3 protein homolog from Drosophila melanogaster (Fruit fly).